Consider the following 256-residue polypeptide: Kallikrein 1-related peptidase-like b4 (256 aa).

Residues 1–17 (MWFLILFLALSLGGIDA) form the signal peptide. The tract at residues 18–24 (APPVQSQ) is activation peptide homolog. Residues 18–253 (APPVQSQVDC…FSSWIRETMA (236 aa)) form the Peptidase S1 domain. An intrachain disulfide couples C45 to C61. Zn(2+) contacts are provided by E77 and H84. 3 cysteine pairs are disulfide-bonded: C147–C214, C179–C193, and C204–C229.

This sequence belongs to the peptidase S1 family. Kallikrein subfamily. As to quaternary structure, 7S nerve growth factor is composed of two alpha chains, a beta dimer composed of identical chains, and two gamma chains. Zn(2+) serves as cofactor. In terms of processing, the presence of Gln-24 prevents cleavage of the activation peptide, which remains attached at the amino end of the mature alpha chain.

The sequence is that of Kallikrein 1-related peptidase-like b4 (Klk1b4) from Mus musculus (Mouse).